A 511-amino-acid chain; its full sequence is MAVAQELYGFPASKLDSFVAQWLQPTREWKEEVLETVQTVEQFLRQENFREDRGPARDVRVLKVLKVGCFGNGTVLRSTTDVELVVFLSCFHSFQEEAKHHQAVLRLIQKRMYYCQELMDLGLSNLSVTNRVPSSLIFTIQTRETWETITVTVVPAYRALGPSCPSSEVYANLIKANGYPGNFSPSFSELQRNFVKHRPTKLKSLLRLVKHWYQQYVRDKCPRANLPPLYALELLTVYAWEAGTREDANFRLDEGLATVMELLQDHELLCIYWTKHYTLQHPVIEACVRRQLRGQRPIILDPADPTNNVAEGYRWDIVAQRANQCLKQDCCYDNRDSPVPSWRVKRAPDIQVTVQEWGHSDLTFWVNPYEPIKKLKEKIQLSQGYLGLQRLSFQEPGGERQLIRSHCTLAYYGIFCDTHICLLDTISPEIQVFVKNPDGRSHAYAIHPLDYVLNLKQQIEDRQGLRCQEQRLEFQGHILEDWFDFKSYGIQDSVTVILSKTTEGAAPFVPS.

Ubiquitin-like domains lie at 350 to 429 (IQVT…ISPE) and 430 to 506 (IQVF…EGAA).

The protein belongs to the 2-5A synthase family. As to quaternary structure, specifically interacts with the ligand binding domain of the thyroid receptor (TR). TRIP14 does not require the presence of thyroid hormone for its interaction. Binds MBD1.

Its subcellular location is the nucleus. It localises to the nucleolus. The protein localises to the cytoplasm. Does not have 2'-5'-OAS activity, but can bind double-stranded RNA. Displays antiviral activity via an alternative antiviral pathway independent of RNase L. This chain is 2'-5'-oligoadenylate synthase-like protein 1 (Oasl1), found in Mus musculus (Mouse).